The primary structure comprises 307 residues: 4-hydroxythreonine-4-phosphate dehydrogenase (307 aa).

Positions 121 and 122 each coordinate substrate. A divalent metal cation contacts are provided by His-150, His-189, and His-245. Residues Lys-253, Asn-262, and Arg-271 each coordinate substrate.

The protein belongs to the PdxA family. As to quaternary structure, homodimer. Requires Zn(2+) as cofactor. Mg(2+) is required as a cofactor. It depends on Co(2+) as a cofactor.

Its subcellular location is the cytoplasm. It catalyses the reaction 4-(phosphooxy)-L-threonine + NAD(+) = 3-amino-2-oxopropyl phosphate + CO2 + NADH. The protein operates within cofactor biosynthesis; pyridoxine 5'-phosphate biosynthesis; pyridoxine 5'-phosphate from D-erythrose 4-phosphate: step 4/5. Functionally, catalyzes the NAD(P)-dependent oxidation of 4-(phosphooxy)-L-threonine (HTP) into 2-amino-3-oxo-4-(phosphooxy)butyric acid which spontaneously decarboxylates to form 3-amino-2-oxopropyl phosphate (AHAP). The polypeptide is 4-hydroxythreonine-4-phosphate dehydrogenase (Sulfurimonas denitrificans (strain ATCC 33889 / DSM 1251) (Thiomicrospira denitrificans (strain ATCC 33889 / DSM 1251))).